A 284-amino-acid polypeptide reads, in one-letter code: Circadian clock oscillator protein KaiA (284 aa).

A psR domain, binds oxidized quinones region spans residues 1 to 135 (MLSQIAICIW…LRLAPVETMA (135 aa)). One can recognise a KaiA N-terminal domain in the interval 1-164 (MLSQIAICIW…DLAQRLQERL (164 aa)). The flexible linker stretch occupies residues 165–173 (GYLGVYYKR). The KaiA C-terminal domain occupies 174–282 (DPDRFLRNLP…CEMYRRSIPR (109 aa)).

It belongs to the KaiA family. In terms of assembly, homodimer. The KaiABC complex composition changes during the circadian cycle to control KaiC phosphorylation. Complexes KaiC(6), KaiA(2-4):KaiC(6), KaiB(6):KaiC(6) and KaiC(6):KaiB(6):KaiA(12) are among the most important forms, many form cooperatively. The KaiA:KaiB complex is only found at 20-24 hours in the circadian cycle (subjective night). Binds to the C-terminal A-loop of KaiC via a coiled-coil structure. KaiA and CikA compete for binding to KaiB(fs). CikA copurifies with this protein in the clock complex. Interacts with LdpA.

Binding of oxidized quinones (produced as darkness falls) prevents KaiA from stimulating KaiC autophosphorylation. In terms of biological role, key component of the KaiABC oscillator complex, which constitutes the main circadian regulator in cyanobacteria. Complex composition changes during the circadian cycle to control KaiC phosphorylation. KaiA stimulates KaiC autophosphorylation, while KaiB sequesters KaiA, leading to KaiC autodephosphorylation. KaiA binding to the KaiC CII domain during the subjective day yields KaiA(2-4):KaiC(6) complexes which stimulate KaiC autophosphorylation. A KaiA dimer is sufficient to enhance KaiC hexamer phosphorylation. Phospho-Ser-431 KaiC accumulation triggers binding of KaiB during the subjective night to form the KaiB(6):KaiC(6) complex, leading to changes in the output regulators CikA and SasA. KaiB(6):KaiC(6) formation exposes a site for KaiA binding on KaiB that sequesters KaiA from KaiC's CII domain, making the KaiC(6):KaiB(6):KaiA(12) complex resulting in KaiC autodephosphorylation. Complete dephosphorylation of KaiC leads to dissociation of KaiA(2):KaiB(1), completing 1 cycle of the Kai oscillator. Circadian oscillations can be generated in vitro by incubating KaiA, KaiB and KaiC with 1 mM ATP. The cycle is self-sustainable for at least 3 cycles and resistant to temperature changes. A very robust clock is reconstituted with KaiA, KaiB, KaiC, SasA, CikA and RpaA; output is measured by transcription from an appropriate reporter. Its function is as follows. KaiA binds oxidized quinones via its N-terminal PsR domain and is able to sense redox signals directly; quinone analog DBMIB (2,5-dibromo-3-methyl-6-isopropyl-p-benzoquinone) blocks KaiA stimulation of KaiC phosphorylation. The homodimer binds up to 8 quinones in the crystal structure, 3 in the PsR domain and 1 via the C-terminal helical bundle. Binding of oxidized quinone to the KaiA C-terminal domain reduces the phosphorylation of KaiC slightly; quinones may interact in a complex manner with KaiA to mediate clock input. The polypeptide is Circadian clock oscillator protein KaiA (Synechococcus elongatus (strain ATCC 33912 / PCC 7942 / FACHB-805) (Anacystis nidulans R2)).